The primary structure comprises 95 residues: Aspartyl/glutamyl-tRNA(Asn/Gln) amidotransferase subunit C (95 aa).

The protein belongs to the GatC family. As to quaternary structure, heterotrimer of A, B and C subunits.

It carries out the reaction L-glutamyl-tRNA(Gln) + L-glutamine + ATP + H2O = L-glutaminyl-tRNA(Gln) + L-glutamate + ADP + phosphate + H(+). The catalysed reaction is L-aspartyl-tRNA(Asn) + L-glutamine + ATP + H2O = L-asparaginyl-tRNA(Asn) + L-glutamate + ADP + phosphate + 2 H(+). In terms of biological role, allows the formation of correctly charged Asn-tRNA(Asn) or Gln-tRNA(Gln) through the transamidation of misacylated Asp-tRNA(Asn) or Glu-tRNA(Gln) in organisms which lack either or both of asparaginyl-tRNA or glutaminyl-tRNA synthetases. The reaction takes place in the presence of glutamine and ATP through an activated phospho-Asp-tRNA(Asn) or phospho-Glu-tRNA(Gln). This Dechloromonas aromatica (strain RCB) protein is Aspartyl/glutamyl-tRNA(Asn/Gln) amidotransferase subunit C.